The primary structure comprises 362 residues: Adenosine deaminase (362 aa).

Zn(2+) is bound by residues His-19 and His-21. Residues His-21, Asp-23, and Gly-181 each coordinate substrate. His-208 serves as a coordination point for Zn(2+). The Proton donor role is filled by Glu-211. Asp-300 is a Zn(2+) binding site.

The protein belongs to the metallo-dependent hydrolases superfamily. Adenosine and AMP deaminases family. Adenosine deaminase subfamily. Zn(2+) is required as a cofactor.

The catalysed reaction is adenosine + H2O + H(+) = inosine + NH4(+). It catalyses the reaction 2'-deoxyadenosine + H2O + H(+) = 2'-deoxyinosine + NH4(+). In terms of biological role, catalyzes the hydrolytic deamination of adenosine and 2-deoxyadenosine. This chain is Adenosine deaminase, found in Mycobacterium leprae (strain TN).